The primary structure comprises 1311 residues: MGKKNPNARHTDAATPLTTDDSNSSSVSRRESATESKSASESESSPPRSNTKQSRTHKNVKASGKATVSSSSDSDQAVANSSANDEEKEPVCKIRIVPLEKLLASPKTKERPSRGSQQKNVTINDSSDEEPLKGSKLVLPARKSRNKNASIIELSDSEEVDEEEESLLVAIPLPKEAQQTKPEKNSSKASKESIEKRQKAQKEATTSSARAIRSVNGTRRGSLSSERSSRASSSRAESPPRPKRCVVRLKRVSLPKTKPAQKPKKMSSDSEEAATTSKKSRQRRSKSESEADSDYEAPAAEEEEEEERKSSGDEEEAANSSDSEVMPQRKRRRKKSESDKGSSDFEPEEKQKKKGRKRIKKTSSGESDGDGDDDKQKNKRKHIRKIIKTKDLDLTTKEAAKEEDDRRKRIEDRQKLYNRIFVKSESVEINELVLDFDEESKKALLQVDKGLLKKLKPHQVAGVKFMWDACFETLKESQEKPGSGCILAHCMGLGKTLQVVTLSHTLLVNTRRTGVDRVLIISPLSTVNNWAREFTSWMKFANRNDIEVYDISRYKDKPTRIFKLNEWFNEGGVCILGYDMYRILANEKAKGLRKKQREQLMQALVDPGPDLVVCDEGHLLKNEKTSISKAVTRMRTKRRIVLTGTPLQNNLREYYCMIQFVKPNLLGTYKEYMNRFVNPITNGQYTDSTERDLRLMKHRSHILHKLLEGCIQRRDYSVLAPYLPPKHEYVVYTTLSELQQKLYGYYMTTHREQSGGDVVGKGARLFQDFQDLRRIWTHPMNLRVNSDNVIAKRLLSNDDSDMEGFICDETDEDEAASNSSDSCETFKSDASMSGLAASSGKVKKRKTRNGNAGGGDSDSDLEMLGGLGGGSSVQKDDPSEWWKPFVEERELNNVHHSPKLLILLRLLQQCEAIGDKLLVFSQSLQSLDVIEHFLSLVDSNTKNYEFEGDVGDFKGCWTSGKDYFRLDGSCSVEQREAMCKQFNNITNLRARLFLISTRAGGLGINLVAANRVVIFDVSWNPSHDTQSIFRVYRFGQIKPCYIYRLIAMGTMEQKVYERQVAKQATAKRVIDEQQISRHYNQTDLMELYSYELKPSTEREMPILPKDRLFAEILTEHEKLIFKYHEHDSLLEQEEHENLTEEERKSAWAEYEAEKTRTVQASQYMSYDRNAFGNQVMGQFGNASGSVTSNKIFGFRSDILLQLLNMKISKDHQELNQNQVIQLVPTYLQQLYNEMNNGDPTMYKDLLNLHSNIVHPSGMYMNPLLYANQNPNAAGYNQGTGGVPPMAGGSVAHGPPAAPAPGFEPDKVYEID.

The segment at 1–384 (MGKKNPNARH…KQKNKRKHIR (384 aa)) is disordered. Residues 28–40 (SRRESATESKSAS) show a composition bias toward basic and acidic residues. Residues 61–83 (KASGKATVSSSSDSDQAVANSSA) show a composition bias toward low complexity. Over residues 114–125 (RGSQQKNVTIND) the composition is skewed to polar residues. Phosphoserine is present on residues S126 and S127. A compositionally biased stretch (acidic residues) spans 155 to 166 (SDSEEVDEEEES). Over residues 181 to 202 (KPEKNSSKASKESIEKRQKAQK) the composition is skewed to basic and acidic residues. Over residues 219–237 (RRGSLSSERSSRASSSRAE) the composition is skewed to low complexity. Positions 241–265 (RPKRCVVRLKRVSLPKTKPAQKPKK) are enriched in basic residues. 3 positions are modified to phosphoserine: S267, S268, and S270. A compositionally biased stretch (acidic residues) spans 290-306 (EADSDYEAPAAEEEEEE). S336, S338, S342, and S343 each carry phosphoserine. Residues 336–351 (SESDKGSSDFEPEEKQ) show a composition bias toward basic and acidic residues. The segment covering 352–361 (KKKGRKRIKK) has biased composition (basic residues). The 189-residue stretch at 476-664 (ESQEKPGSGC…YCMIQFVKPN (189 aa)) folds into the Helicase ATP-binding domain. 489-496 (HCMGLGKT) lines the ATP pocket. A DEGH box motif is present at residues 615–618 (DEGH). Positions 837–878 (ASSGKVKKRKTRNGNAGGGDSDSDLEMLGGLGGGSSVQKDDP) are disordered. S857 and S859 each carry phosphoserine. Residues 905–1085 (RLLQQCEAIG…SRHYNQTDLM (181 aa)) enclose the Helicase C-terminal domain. A disordered region spans residues 1285–1311 (MAGGSVAHGPPAAPAPGFEPDKVYEID).

It belongs to the SNF2/RAD54 helicase family.

It is found in the nucleus. The protein resides in the chromosome. It catalyses the reaction ATP + H2O = ADP + phosphate + H(+). Functionally, global transcriptional regulator. Modifies gene expression by affecting chromatin. The polypeptide is Transcriptional regulator ATRX homolog (XNP) (Drosophila melanogaster (Fruit fly)).